Here is a 145-residue protein sequence, read N- to C-terminus: MDESKKNERLKQLTDIQYNVTQKAGTERPFQNEFYDNAAKGIYVDIVSGKPLFSSTDQYDAGCGWPSFTKPIDEAEVKEHKDRTHGMIRTEVKSVDADSHLGHVFPDGPQDKGGLRYCINSAALRFIPVDKLDDEGYQAYKKIFE.

In terms of domain architecture, MsrB spans 6-129; the sequence is KNERLKQLTD…NSAALRFIPV (124 aa). The active-site Nucleophile is C118.

The protein belongs to the MsrB Met sulfoxide reductase family.

The enzyme catalyses L-methionyl-[protein] + [thioredoxin]-disulfide + H2O = L-methionyl-(R)-S-oxide-[protein] + [thioredoxin]-dithiol. This Listeria welshimeri serovar 6b (strain ATCC 35897 / DSM 20650 / CCUG 15529 / CIP 8149 / NCTC 11857 / SLCC 5334 / V8) protein is Peptide methionine sulfoxide reductase MsrB.